A 587-amino-acid polypeptide reads, in one-letter code: Phosphomethylpyrimidine synthase (587 aa).

The tract at residues 1–58 is disordered; the sequence is MTPTQNEIHPKHSYSPIRKDGLEVPETEIRLDDSPSGPNEPFRIYRTRGPETNPKQGL. Residues 17–33 are compositionally biased toward basic and acidic residues; it reads IRKDGLEVPETEIRLDD. Residues asparagine 180, methionine 209, tyrosine 238, histidine 274, 294–296, 335–338, and glutamate 374 contribute to the substrate site; these read SRG and DGLR. Position 378 (histidine 378) interacts with Zn(2+). Tyrosine 401 serves as a coordination point for substrate. Position 442 (histidine 442) interacts with Zn(2+). 3 residues coordinate [4Fe-4S] cluster: cysteine 522, cysteine 525, and cysteine 530.

This sequence belongs to the ThiC family. [4Fe-4S] cluster serves as cofactor.

It carries out the reaction 5-amino-1-(5-phospho-beta-D-ribosyl)imidazole + S-adenosyl-L-methionine = 4-amino-2-methyl-5-(phosphooxymethyl)pyrimidine + CO + 5'-deoxyadenosine + formate + L-methionine + 3 H(+). It functions in the pathway cofactor biosynthesis; thiamine diphosphate biosynthesis. Its function is as follows. Catalyzes the synthesis of the hydroxymethylpyrimidine phosphate (HMP-P) moiety of thiamine from aminoimidazole ribotide (AIR) in a radical S-adenosyl-L-methionine (SAM)-dependent reaction. This is Phosphomethylpyrimidine synthase from Corynebacterium glutamicum (strain ATCC 13032 / DSM 20300 / JCM 1318 / BCRC 11384 / CCUG 27702 / LMG 3730 / NBRC 12168 / NCIMB 10025 / NRRL B-2784 / 534).